We begin with the raw amino-acid sequence, 101 residues long: Urease subunit beta 1 (101 aa).

This sequence belongs to the urease beta subunit family. Heterotrimer of UreA (gamma), UreB (beta) and UreC (alpha) subunits. Three heterotrimers associate to form the active enzyme.

It is found in the cytoplasm. It carries out the reaction urea + 2 H2O + H(+) = hydrogencarbonate + 2 NH4(+). It functions in the pathway nitrogen metabolism; urea degradation; CO(2) and NH(3) from urea (urease route): step 1/1. Functionally, disruption of the ure1 gene cluster suggests that it protects brucellae during their passage through the stomach. The major route of infection in human brucellosis is oral. This chain is Urease subunit beta 1, found in Brucella abortus (strain 2308).